The sequence spans 29 residues: Dermaseptin-S5 (29 aa).

This sequence belongs to the frog skin active peptide (FSAP) family. Dermaseptin subfamily. In terms of tissue distribution, expressed by the skin glands.

It is found in the secreted. Potent antimicrobial peptide with activity against bacteria and protozoa. Also has activity against fungi. Probably acts by disturbing membrane functions with its amphipathic structure. The polypeptide is Dermaseptin-S5 (Phyllomedusa sauvagei (Sauvage's leaf frog)).